The primary structure comprises 186 residues: Sec-independent protein translocase protein TatB (186 aa).

A helical membrane pass occupies residues methionine 1 to glycine 21. Residues leucine 162–serine 186 are disordered. The span at serine 177–serine 186 shows a compositional bias: polar residues.

It belongs to the TatB family. As to quaternary structure, the Tat system comprises two distinct complexes: a TatABC complex, containing multiple copies of TatA, TatB and TatC subunits, and a separate TatA complex, containing only TatA subunits. Substrates initially bind to the TatABC complex, which probably triggers association of the separate TatA complex to form the active translocon.

Its subcellular location is the cell inner membrane. Part of the twin-arginine translocation (Tat) system that transports large folded proteins containing a characteristic twin-arginine motif in their signal peptide across membranes. Together with TatC, TatB is part of a receptor directly interacting with Tat signal peptides. TatB may form an oligomeric binding site that transiently accommodates folded Tat precursor proteins before their translocation. This chain is Sec-independent protein translocase protein TatB, found in Haemophilus influenzae (strain 86-028NP).